Reading from the N-terminus, the 116-residue chain is Iron-sulfur cluster insertion protein ErpA (116 aa).

Iron-sulfur cluster-binding residues include Cys44, Cys108, and Cys110.

The protein belongs to the HesB/IscA family. As to quaternary structure, homodimer. The cofactor is iron-sulfur cluster.

Its function is as follows. Required for insertion of 4Fe-4S clusters for at least IspG. In Stutzerimonas stutzeri (strain A1501) (Pseudomonas stutzeri), this protein is Iron-sulfur cluster insertion protein ErpA.